We begin with the raw amino-acid sequence, 289 residues long: ATP phosphoribosyltransferase (289 aa).

Belongs to the ATP phosphoribosyltransferase family. Long subfamily. Requires Mg(2+) as cofactor.

The protein localises to the cytoplasm. The catalysed reaction is 1-(5-phospho-beta-D-ribosyl)-ATP + diphosphate = 5-phospho-alpha-D-ribose 1-diphosphate + ATP. The protein operates within amino-acid biosynthesis; L-histidine biosynthesis; L-histidine from 5-phospho-alpha-D-ribose 1-diphosphate: step 1/9. Feedback inhibited by histidine. In terms of biological role, catalyzes the condensation of ATP and 5-phosphoribose 1-diphosphate to form N'-(5'-phosphoribosyl)-ATP (PR-ATP). Has a crucial role in the pathway because the rate of histidine biosynthesis seems to be controlled primarily by regulation of HisG enzymatic activity. The protein is ATP phosphoribosyltransferase of Pelotomaculum thermopropionicum (strain DSM 13744 / JCM 10971 / SI).